Reading from the N-terminus, the 248-residue chain is NH(3)-dependent NAD(+) synthetase (248 aa).

31–38 (GLSGGVDS) contacts ATP. Asp37 serves as a coordination point for Mg(2+). Arg114 contacts deamido-NAD(+). An ATP-binding site is contributed by Thr134. Glu139 is a Mg(2+) binding site. Positions 147 and 154 each coordinate deamido-NAD(+). Residues Lys163 and Thr185 each contribute to the ATP site. 232–233 (HK) contacts deamido-NAD(+).

This sequence belongs to the NAD synthetase family. As to quaternary structure, homodimer.

It carries out the reaction deamido-NAD(+) + NH4(+) + ATP = AMP + diphosphate + NAD(+) + H(+). It functions in the pathway cofactor biosynthesis; NAD(+) biosynthesis; NAD(+) from deamido-NAD(+) (ammonia route): step 1/1. Its function is as follows. Catalyzes the ATP-dependent amidation of deamido-NAD to form NAD. Uses ammonia as a nitrogen source. The chain is NH(3)-dependent NAD(+) synthetase from Mycoplasma pneumoniae (strain ATCC 29342 / M129 / Subtype 1) (Mycoplasmoides pneumoniae).